The following is a 708-amino-acid chain: Polyribonucleotide nucleotidyltransferase (708 aa).

Mg(2+)-binding residues include Asp488 and Asp494. A KH domain is found at 555-615 (PIIKVTKVDP…ENVDKAIELI (61 aa)). An S1 motif domain is found at 625–692 (GEVLEGKVTR…DLGRLQFKRV (68 aa)).

This sequence belongs to the polyribonucleotide nucleotidyltransferase family. Mg(2+) serves as cofactor.

The protein resides in the cytoplasm. The enzyme catalyses RNA(n+1) + phosphate = RNA(n) + a ribonucleoside 5'-diphosphate. Its function is as follows. Involved in mRNA degradation. Catalyzes the phosphorolysis of single-stranded polyribonucleotides processively in the 3'- to 5'-direction. This Thermotoga petrophila (strain ATCC BAA-488 / DSM 13995 / JCM 10881 / RKU-1) protein is Polyribonucleotide nucleotidyltransferase.